Consider the following 390-residue polypeptide: tRNA(Met) cytidine acetate ligase (390 aa).

ATP is bound by residues 7–20 (VVEYNPFHNGHKLH), Gly101, Asn162, and Arg187.

Belongs to the TmcAL family.

Its subcellular location is the cytoplasm. It carries out the reaction cytidine(34) in elongator tRNA(Met) + acetate + ATP = N(4)-acetylcytidine(34) in elongator tRNA(Met) + AMP + diphosphate. Functionally, catalyzes the formation of N(4)-acetylcytidine (ac(4)C) at the wobble position of elongator tRNA(Met), using acetate and ATP as substrates. First activates an acetate ion to form acetyladenylate (Ac-AMP) and then transfers the acetyl group to tRNA to form ac(4)C34. The protein is tRNA(Met) cytidine acetate ligase of Listeria monocytogenes serotype 4b (strain F2365).